Reading from the N-terminus, the 187-residue chain is Peptide deformylase (187 aa).

Residues C107 and H149 each contribute to the Fe cation site. Residue E150 is part of the active site. Fe cation is bound at residue H153.

It belongs to the polypeptide deformylase family. Fe(2+) is required as a cofactor.

It catalyses the reaction N-terminal N-formyl-L-methionyl-[peptide] + H2O = N-terminal L-methionyl-[peptide] + formate. In terms of biological role, removes the formyl group from the N-terminal Met of newly synthesized proteins. Requires at least a dipeptide for an efficient rate of reaction. N-terminal L-methionine is a prerequisite for activity but the enzyme has broad specificity at other positions. The polypeptide is Peptide deformylase (Picosynechococcus sp. (strain ATCC 27264 / PCC 7002 / PR-6) (Agmenellum quadruplicatum)).